A 372-amino-acid chain; its full sequence is Aminomethyltransferase (372 aa).

Belongs to the GcvT family. As to quaternary structure, the glycine cleavage system is composed of four proteins: P, T, L and H.

It carries out the reaction N(6)-[(R)-S(8)-aminomethyldihydrolipoyl]-L-lysyl-[protein] + (6S)-5,6,7,8-tetrahydrofolate = N(6)-[(R)-dihydrolipoyl]-L-lysyl-[protein] + (6R)-5,10-methylene-5,6,7,8-tetrahydrofolate + NH4(+). In terms of biological role, the glycine cleavage system catalyzes the degradation of glycine. The protein is Aminomethyltransferase of Paraburkholderia phymatum (strain DSM 17167 / CIP 108236 / LMG 21445 / STM815) (Burkholderia phymatum).